The primary structure comprises 495 residues: Cytochrome P450 monooxygenase BOA4 (495 aa).

A helical membrane pass occupies residues 12–31 (LANSNTVIAGCIVFALYYLF). The N-linked (GlcNAc...) asparagine glycan is linked to Asn115. Cys439 contributes to the heme binding site.

This sequence belongs to the cytochrome P450 family. Heme is required as a cofactor.

It is found in the membrane. The protein operates within polyketide biosynthesis. Cytochrome P450 monooxygenase; part of the gene cluster A that mediates the biosynthesis of botcinic acid and its botcinin derivatives, acetate-derived polyketides that contribute to virulence when combined with the sesquiterpene botrydial. Botcinic acid and its derivatives have been shown to induce chlorosis and necrosis during host plant infection, but also have antifungal activities. Two polyketide synthases, BOA6 and BOA9, are involved in the biosynthesis of botcinins. BOA6 mediates the formation of the per-methylated tetraketide core by condensation of four units of malonyl-CoA with one unit of acetyl-CoA, which would be methylated in activated methylene groups to yield a bicyclic acid intermediate that could then either be converted to botrylactone derivatives or lose the starter acetate unit through a retro-Claisen type C-C bond cleavage to yield botcinin derivatives. The second polyketide synthase, BOA9, is probably required for the biosynthesis of the tetraketide side chain of botcinins. The methyltransferase (MT) domain within BOA6 is probably responsible for the incorporation of four methyl groups. The trans-enoyl reductase BOA5 might take over the enoyl reductase function of BOA6 that misses an ER domain. The monooxygenases BOA2, BOA3 and BOA4 might be involved in further hydroxylations at C4, C5 and C8, whereas BOA7, close to BOA9, could potentially be involved in the hydroxylation at C4 in the side chain of botcinins. The protein is Cytochrome P450 monooxygenase BOA4 of Botryotinia fuckeliana (strain B05.10) (Noble rot fungus).